The following is a 394-amino-acid chain: Carbamoyltransferase HypF homolog (394 aa).

It belongs to the carbamoyltransferase HypF family.

This Cupriavidus necator (strain ATCC 17699 / DSM 428 / KCTC 22496 / NCIMB 10442 / H16 / Stanier 337) (Ralstonia eutropha) protein is Carbamoyltransferase HypF homolog (hypF1).